The primary structure comprises 931 residues: MEAEAAAAVVASSASASASAGRSRPSSSAAQVTSNSAVRAGEENAASLYVLSVIDSLKKRITADRLTYIKNRIGENKTNISSYTQRTYNLSKNRQISTSKGTDSASNLLTKRQDDALCTLHSLDIIPVDKDGGTFQDESPFSSSNVMFGGNLGPKNAIIRPIKLPEVPKLPPYTTWIFLDRNQRMTEDQSVLGRRRIYYDTSCGEALICSDSEDEAIEDEEEKKEFKHSEDHIIRMTVQECGMSDAVLQTLARHMERAADDIKARYEILHGEKTKDSCKKGTEHNVKVEDLYCDKDLDAALDSFDNLFCRRCLVFDCKLHGCSQDLVFPTEKQPAWSGVDDSVPCGIHCHKLASEPDAAAGADHMLFDVEEPTHSSDNVMNQPGSNRKKNGSSGRKTKSQQSESSSTARVISESSDSEVHPISNKSPQHSPSPSKVKIGPKGGIRKITNRRIAERILMSVKKGQREMASSDSNFVSGYLLARDMKLRSDTRNGNKELIVSSQQSSPSTRSSKKKSTPQIGNSSAFAEAHNDSTEEANNRHSATDGYDSSRKEEFVNENLCKQEVYLRSWKAIEQGLLVKGLEIFGRNSCLIARNLLGGMKTCKDVFQYMNYIENNSASGALSGVDSLVKGYIKGTELRTRSRYFRRRGKVRRLKYTWKSAGYNFKRITERKDQPCRQYNPCGCQSTCGKQCPCLSNGTCCEKYCGCPKICKNRFRGCHCAKSQCRSRQCPCFAADRECDPDVCRNCWVGCGDGTLGVPNQRGDNYECRNMKLLLKQQQRVLLGRSDVSGWGAFLKNSVSKHEYLGEYTGELISHKEADKRGKIYDRENSSFLFNLNNEYVLDAYRMGDKLKFANHAPDPNCYAKVIMVTGDHRVGIFAKERILAGEELFYDYRYEPDRAPAWARKPEASGAKDDGQPFNGRAKKLAQNNRG.

The span at 1 to 30 shows a compositional bias: low complexity; the sequence is MEAEAAAAVVASSASASASAGRSRPSSSAA. Disordered regions lie at residues 1 to 37, 372 to 450, and 491 to 549; these read MEAE…SNSA, PTHS…ITNR, and RNGN…YDSS. The segment covering 375 to 385 has biased composition (polar residues); it reads SSDNVMNQPGS. Residues 386 to 398 are compositionally biased toward basic residues; it reads NRKKNGSSGRKTK. The segment covering 423-433 has biased composition (polar residues); sequence SNKSPQHSPSP. Over residues 500 to 509 the composition is skewed to low complexity; that stretch reads SSQQSSPSTR. Positions 528-549 are enriched in basic and acidic residues; it reads AHNDSTEEANNRHSATDGYDSS. The SANT domain maps to 565 to 615; the sequence is YLRSWKAIEQGLLVKGLEIFGRNSCLIARNLLGGMKTCKDVFQYMNYIENN. In terms of domain architecture, CXC spans 664–763; that stretch reads FKRITERKDQ…TLGVPNQRGD (100 aa). Positions 778-893 constitute an SET domain; it reads QRVLLGRSDV…AGEELFYDYR (116 aa). The span at 903–915 shows a compositional bias: basic and acidic residues; it reads ARKPEASGAKDDG. The interval 903–931 is disordered; the sequence is ARKPEASGAKDDGQPFNGRAKKLAQNNRG.

Belongs to the class V-like SAM-binding methyltransferase superfamily. Histone-lysine methyltransferase family. EZ subfamily. As to expression, widely expressed.

The protein resides in the nucleus. The catalysed reaction is L-lysyl(27)-[histone H3] + 3 S-adenosyl-L-methionine = N(6),N(6),N(6)-trimethyl-L-lysyl(27)-[histone H3] + 3 S-adenosyl-L-homocysteine + 3 H(+). Its function is as follows. Polycomb group (PcG) protein. Catalytic subunit of some PcG multiprotein complex, which methylates 'Lys-27' of histone H3, leading to transcriptional repression of the affected target genes. PcG proteins are not required to initiate repression, but to maintain it during later stages of development. This chain is Histone-lysine N-methyltransferase EZ1 (EZ1), found in Zea mays (Maize).